A 396-amino-acid chain; its full sequence is MTTGKTAPRRLSIFGSTGSIGRNTLNVIEHLGGRENFEISVLTGNGNVELLARQARSSGARLAVTASDRHYESLKRELSGSGIAVASGKSGLMEAADRDADWVMAAIVGTAGLAPTLAAARRGADIALANKECLVSAGDLFIKAIREGGGRLLPVDSEHNAIFQVLEENQRHAIERVILTASGGPFRNASLEEMKHVTAETARAHPNWSMGLKISIDSASMFNKALEMIEARHLFSLNPDQIEVIFHPQSIIHSMVGYTDGSVLAQLGAPDMRTAIGYALSFPRRPKLPVERLDFAKLARLDFEAPDEVRFPALRLAHLAMTRGGVQGAVLNGAKEVALEAFIEGRLAFLAMAEITERVMDDLAHLPPAAGMDDVFSADRQARQRAAELMKLDLVG.

Thr-17, Gly-18, Ser-19, Ile-20, Asn-47, and Asn-130 together coordinate NADPH. Lys-131 is a binding site for 1-deoxy-D-xylulose 5-phosphate. NADPH is bound at residue Glu-132. Asp-156 is a Mn(2+) binding site. Ser-157, Glu-158, Ser-182, and His-205 together coordinate 1-deoxy-D-xylulose 5-phosphate. Glu-158 is a Mn(2+) binding site. NADPH is bound at residue Gly-211. Ser-218, Asn-223, Lys-224, and Glu-227 together coordinate 1-deoxy-D-xylulose 5-phosphate. Glu-227 is a binding site for Mn(2+).

Belongs to the DXR family. It depends on Mg(2+) as a cofactor. Mn(2+) is required as a cofactor.

The catalysed reaction is 2-C-methyl-D-erythritol 4-phosphate + NADP(+) = 1-deoxy-D-xylulose 5-phosphate + NADPH + H(+). It participates in isoprenoid biosynthesis; isopentenyl diphosphate biosynthesis via DXP pathway; isopentenyl diphosphate from 1-deoxy-D-xylulose 5-phosphate: step 1/6. Its function is as follows. Catalyzes the NADPH-dependent rearrangement and reduction of 1-deoxy-D-xylulose-5-phosphate (DXP) to 2-C-methyl-D-erythritol 4-phosphate (MEP). This is 1-deoxy-D-xylulose 5-phosphate reductoisomerase from Rhizobium etli (strain ATCC 51251 / DSM 11541 / JCM 21823 / NBRC 15573 / CFN 42).